The following is a 284-amino-acid chain: Tetraspanin-10 (284 aa).

Residues 1–11 are Cytoplasmic-facing; sequence MGMGTSTFVIR. A helical membrane pass occupies residues 12 to 32; that stretch reads WVNLLTMLLAVAVIIFGVWMS. At 33-43 the chain is on the extracellular side; the sequence is THNDGCRRSLT. A helical transmembrane segment spans residues 44-64; the sequence is FPVIALGGFIFLISIIGFLGA. The Cytoplasmic portion of the chain corresponds to 65–75; the sequence is CKRSVALLWIY. A helical transmembrane segment spans residues 76–96; sequence LAVLLIVLIAILVFTVLAFIV. At 97-228 the chain is on the extracellular side; that stretch reads TNNGSGHTNP…AGVAQYMKTE (132 aa). Residues N99, N128, and N183 are each glycosylated (N-linked (GlcNAc...) asparagine). A helical membrane pass occupies residues 229–249; that stretch reads WRLVAIFNVVLFVVLISSLLS. Topologically, residues 250-284 are cytoplasmic; sequence TRFDSEQSFGLLNGLVQISNITFKDCQTTTVPKQF.

Belongs to the tetraspanin (TM4SF) family.

The protein resides in the membrane. May be involved in the regulation of cell differentiation. The sequence is that of Tetraspanin-10 (TET10) from Arabidopsis thaliana (Mouse-ear cress).